A 491-amino-acid chain; its full sequence is Protein DETOXIFICATION 20 (491 aa).

Transmembrane regions (helical) follow at residues 37 to 57 (LWVVAAPAIFTRYSTFGVSMV), 75 to 95 (ITFTILLRFSNGILLGMAGAL), 120 to 140 (IVLTGGTICLMPVFIFAGPIL), 156 to 176 (LALWVIGINFSFVPSFTCQMF), 185 to 205 (IISYVTAVSLGLHVFFSWLLV), 214 to 234 (GAMTSMLIAFWLPIIVQLLYV), 265 to 285 (GGMLCLELWYNSVLVLLTGNL), 296 to 316 (AICISINALEMMIALGFLAAV), 337 to 357 (LIAVFTSLSIGIVLFFVFLFL), 381 to 401 (LLAFSILLNSVQPVLSGVAIG), 413 to 433 (LACYYLVGIPIGVILGYVVGL), and 438 to 458 (VWIGMLFGIFVQTCVLTVMTL).

The protein belongs to the multi antimicrobial extrusion (MATE) (TC 2.A.66.1) family.

The protein localises to the membrane. The protein is Protein DETOXIFICATION 20 of Arabidopsis thaliana (Mouse-ear cress).